Here is a 519-residue protein sequence, read N- to C-terminus: Acetylcholine receptor subunit gamma (519 aa).

The signal sequence occupies residues 1–22 (MQGGQRPHLLLLLLAVCLGAQS). Topologically, residues 23–240 (RNQEERLLAD…VVFYLLIQRK (218 aa)) are extracellular. 2 N-linked (GlcNAc...) asparagine glycosylation sites follow: Asn-52 and Asn-163. Residues Cys-150 and Cys-164 are joined by a disulfide bond. Transmembrane regions (helical) follow at residues 241 to 265 (PLFY…IYFL), 274 to 292 (CTVA…FLVA), and 308 to 329 (YLTF…VLNV). Residues 330–476 (SLRSPHTHSM…WLLVGRVLDR (147 aa)) are Cytoplasmic-facing. Residues 477-497 (VCFLAMLSLFICGTAGIFLMA) traverse the membrane as a helical segment.

It belongs to the ligand-gated ion channel (TC 1.A.9) family. Acetylcholine receptor (TC 1.A.9.1) subfamily. Gamma/CHRNG sub-subfamily. As to quaternary structure, pentamer of two alpha chains, and one each of the beta, delta, and gamma (in immature muscle) or epsilon (in mature muscle) chains. As to expression, at least in myotubes of skeletal muscle.

The protein localises to the postsynaptic cell membrane. The protein resides in the cell membrane. The catalysed reaction is K(+)(in) = K(+)(out). It catalyses the reaction Na(+)(in) = Na(+)(out). After binding acetylcholine, the AChR responds by an extensive change in conformation that affects all subunits and leads to opening of an ion-conducting channel across the plasma membrane. This chain is Acetylcholine receptor subunit gamma (Chrng), found in Mus musculus (Mouse).